A 658-amino-acid chain; its full sequence is DNA mismatch repair protein MutL (658 aa).

2 disordered regions span residues 114 to 137 (RQNDSSHATQVKAEDGKLSSPTAA) and 437 to 456 (RFGNMPSETPAPQTDTPLSD). Over residues 442–456 (PSETPAPQTDTPLSD) the composition is skewed to polar residues.

It belongs to the DNA mismatch repair MutL/HexB family.

Functionally, this protein is involved in the repair of mismatches in DNA. It is required for dam-dependent methyl-directed DNA mismatch repair. May act as a 'molecular matchmaker', a protein that promotes the formation of a stable complex between two or more DNA-binding proteins in an ATP-dependent manner without itself being part of a final effector complex. The protein is DNA mismatch repair protein MutL of Neisseria meningitidis serogroup B (strain ATCC BAA-335 / MC58).